Reading from the N-terminus, the 249-residue chain is 5'-nucleotidase SurE (249 aa).

Positions 9, 10, 40, and 92 each coordinate a divalent metal cation.

The protein belongs to the SurE nucleotidase family. A divalent metal cation serves as cofactor.

The protein resides in the cytoplasm. It catalyses the reaction a ribonucleoside 5'-phosphate + H2O = a ribonucleoside + phosphate. Its function is as follows. Nucleotidase that shows phosphatase activity on nucleoside 5'-monophosphates. This Shewanella oneidensis (strain ATCC 700550 / JCM 31522 / CIP 106686 / LMG 19005 / NCIMB 14063 / MR-1) protein is 5'-nucleotidase SurE.